The chain runs to 96 residues: Prokineticin Bv8 (96 aa).

Residues 1–19 (MKCFAQIVVLLLVIAFSHG) form the signal peptide. A may be important for binding to prokineticin receptor 2 region spans residues 20-24 (AVITG). 5 disulfide bridges follow: Cys-26–Cys-38, Cys-32–Cys-50, Cys-37–Cys-78, Cys-60–Cys-86, and Cys-80–Cys-95.

As to expression, expressed by the skin glands.

It localises to the secreted. In terms of biological role, potent agonist for both PKR1/PROKR1 and PKR2/PROKR2, and inducer of a potent and long-lasting hyperalgesia. Shows an EC(50) of 0.264 nM, when tested on neuroblastoma cells (SH-SY5Y) which endogenously express mainly PKR2/PROKR2. Also potentiates capsaicin-induced TRPV1 current, when tested on DRG neurons. Induces a biphasic hyperalgesia to tactile and thermal stimuli after systemic injection of this protein into rat. The initial phase of hyperalgesia is caused by a local action on nociceptors, because intraplantar injection of this protein causes a strong and localized hyperalgesia with a similar time course to that of the initial phase of hyperalgesia seen with systemic injection. The secondary phase of hyperalgesia is not seen with local intraplantar injection and is therefore probably attributable to a central action of this protein. At subnanomolar concentrations, this protein both induces potent chemotaxis of macrophages and stimulates LPS-induced production of the pro-inflammatory cytokines IL-1 and IL-12. In vivo, this protein potently stimulates the contraction of the guinea-pig gastrointestinal (GI) smooth muscle (at nanomolar concentration). In Bombina variegata (Yellow-bellied toad), this protein is Prokineticin Bv8.